The following is a 429-amino-acid chain: Histidinol dehydrogenase (429 aa).

3 residues coordinate NAD(+): Y127, Q188, and N211. Substrate is bound by residues S234, Q256, and H259. Positions 256 and 259 each coordinate Zn(2+). Active-site proton acceptor residues include E324 and H325. Substrate is bound by residues H325, D358, E412, and H417. Residue D358 coordinates Zn(2+). H417 is a binding site for Zn(2+).

Belongs to the histidinol dehydrogenase family. The cofactor is Zn(2+).

The enzyme catalyses L-histidinol + 2 NAD(+) + H2O = L-histidine + 2 NADH + 3 H(+). It functions in the pathway amino-acid biosynthesis; L-histidine biosynthesis; L-histidine from 5-phospho-alpha-D-ribose 1-diphosphate: step 9/9. Its function is as follows. Catalyzes the sequential NAD-dependent oxidations of L-histidinol to L-histidinaldehyde and then to L-histidine. In Bacillus cereus (strain ATCC 10987 / NRS 248), this protein is Histidinol dehydrogenase.